We begin with the raw amino-acid sequence, 445 residues long: tRNA modification GTPase MnmE (445 aa).

(6S)-5-formyl-5,6,7,8-tetrahydrofolate-binding residues include arginine 20, glutamate 79, and lysine 119. Residues 215–371 (GLKLAIIGPP…ILKNIENIAE (157 aa)) enclose the TrmE-type G domain. K(+) is bound at residue asparagine 225. GTP-binding positions include 225-230 (NVGKSS), 244-250 (SNIAGTT), and 269-272 (DTAG). Serine 229 provides a ligand contact to Mg(2+). K(+) is bound by residues serine 244, isoleucine 246, and threonine 249. Residue threonine 250 coordinates Mg(2+). Residue lysine 445 coordinates (6S)-5-formyl-5,6,7,8-tetrahydrofolate.

It belongs to the TRAFAC class TrmE-Era-EngA-EngB-Septin-like GTPase superfamily. TrmE GTPase family. In terms of assembly, homodimer. Heterotetramer of two MnmE and two MnmG subunits. K(+) is required as a cofactor.

It is found in the cytoplasm. Its function is as follows. Exhibits a very high intrinsic GTPase hydrolysis rate. Involved in the addition of a carboxymethylaminomethyl (cmnm) group at the wobble position (U34) of certain tRNAs, forming tRNA-cmnm(5)s(2)U34. In Rickettsia rickettsii (strain Iowa), this protein is tRNA modification GTPase MnmE.